A 116-amino-acid chain; its full sequence is Large ribosomal subunit protein uL18 (116 aa).

Belongs to the universal ribosomal protein uL18 family. As to quaternary structure, part of the 50S ribosomal subunit; part of the 5S rRNA/L5/L18/L25 subcomplex. Contacts the 5S and 23S rRNAs.

In terms of biological role, this is one of the proteins that bind and probably mediate the attachment of the 5S RNA into the large ribosomal subunit, where it forms part of the central protuberance. The polypeptide is Large ribosomal subunit protein uL18 (Pseudomonas aeruginosa (strain UCBPP-PA14)).